Consider the following 48-residue polypeptide: ATP synthase protein 8 (48 aa).

A helical membrane pass occupies residues 12 to 32 (LLTFGMLAISMLLYLVSTIIL).

It belongs to the ATPase protein 8 family. In terms of assembly, F-type ATPases have 2 components, CF(1) - the catalytic core - and CF(0) - the membrane proton channel.

The protein resides in the mitochondrion membrane. Mitochondrial membrane ATP synthase (F(1)F(0) ATP synthase or Complex V) produces ATP from ADP in the presence of a proton gradient across the membrane which is generated by electron transport complexes of the respiratory chain. F-type ATPases consist of two structural domains, F(1) - containing the extramembraneous catalytic core and F(0) - containing the membrane proton channel, linked together by a central stalk and a peripheral stalk. During catalysis, ATP synthesis in the catalytic domain of F(1) is coupled via a rotary mechanism of the central stalk subunits to proton translocation. Part of the complex F(0) domain. Minor subunit located with subunit a in the membrane. The protein is ATP synthase protein 8 (ATP8) of Debaryomyces hansenii (strain ATCC 36239 / CBS 767 / BCRC 21394 / JCM 1990 / NBRC 0083 / IGC 2968) (Yeast).